Here is a 688-residue protein sequence, read N- to C-terminus: Lectin-domain containing receptor kinase VI.3 (688 aa).

An N-terminal signal peptide occupies residues 1–14; sequence MLVLFLLLTIPTRA. At 15–306 the chain is on the extracellular side; the sequence is QRTTTETPKT…KRGYNSQVLA (292 aa). Residues 22 to 271 are legume-lectin like; that stretch reads PKTEFIFRGF…AHYVMGWSFS (250 aa). Residues 307–327 form a helical membrane-spanning segment; the sequence is LIVALSGVTVILLALLFFFVM. Topologically, residues 328 to 688 are cytoplasmic; sequence YKKRLQQGEV…VSSSSVISGR (361 aa). Residues 361–640 enclose the Protein kinase domain; the sequence is FKENRIVGTG…LNGDDDVPEI (280 aa). ATP contacts are provided by residues 367–375 and Lys391; that span reads VGTGGFGTV. Asp490 functions as the Proton acceptor in the catalytic mechanism. The interval 662-688 is disordered; that stretch reads VSSDRASSSVPSFSVTRVSSSSVISGR.

In the C-terminal section; belongs to the protein kinase superfamily. Ser/Thr protein kinase family. The protein in the N-terminal section; belongs to the leguminous lectin family.

Its subcellular location is the cell membrane. It carries out the reaction L-seryl-[protein] + ATP = O-phospho-L-seryl-[protein] + ADP + H(+). The catalysed reaction is L-threonyl-[protein] + ATP = O-phospho-L-threonyl-[protein] + ADP + H(+). Its function is as follows. Involved in negative regulation of abscisic acid response in seed germination. The sequence is that of Lectin-domain containing receptor kinase VI.3 (LECRK63) from Arabidopsis thaliana (Mouse-ear cress).